Consider the following 228-residue polypeptide: L-ribulose-5-phosphate 4-epimerase UlaF (228 aa).

Residues 26 to 27 (GN), 43 to 44 (SG), and 72 to 73 (SS) contribute to the substrate site. 3 residues coordinate Zn(2+): D74, H93, and H95. D118 acts as the Proton donor/acceptor in catalysis. H167 provides a ligand contact to Zn(2+). Y225 serves as the catalytic Proton donor/acceptor.

The protein belongs to the aldolase class II family. AraD/FucA subfamily. Zn(2+) serves as cofactor.

The enzyme catalyses L-ribulose 5-phosphate = D-xylulose 5-phosphate. The protein operates within cofactor degradation; L-ascorbate degradation; D-xylulose 5-phosphate from L-ascorbate: step 4/4. In terms of biological role, catalyzes the isomerization of L-ribulose 5-phosphate to D-xylulose 5-phosphate. Is involved in the anaerobic L-ascorbate utilization. The polypeptide is L-ribulose-5-phosphate 4-epimerase UlaF (Escherichia coli O17:K52:H18 (strain UMN026 / ExPEC)).